Here is a 160-residue protein sequence, read N- to C-terminus: Cytochrome b6-f complex subunit 4 (160 aa).

Helical transmembrane passes span 36 to 56, 95 to 115, and 128 to 148; these read LLYI…GLAV, LLGI…PFIE, and IAMA…IGAC.

This sequence belongs to the cytochrome b family. PetD subfamily. In terms of assembly, the 4 large subunits of the cytochrome b6-f complex are cytochrome b6, subunit IV (17 kDa polypeptide, PetD), cytochrome f and the Rieske protein, while the 4 small subunits are PetG, PetL, PetM and PetN. The complex functions as a dimer.

It localises to the cellular thylakoid membrane. Functionally, component of the cytochrome b6-f complex, which mediates electron transfer between photosystem II (PSII) and photosystem I (PSI), cyclic electron flow around PSI, and state transitions. This chain is Cytochrome b6-f complex subunit 4, found in Prochlorococcus marinus (strain MIT 9303).